Here is a 429-residue protein sequence, read N- to C-terminus: 3-phosphoshikimate 1-carboxyvinyltransferase (429 aa).

3 residues coordinate 3-phosphoshikimate: K25, S26, and R30. K25 provides a ligand contact to phosphoenolpyruvate. 2 residues coordinate phosphoenolpyruvate: G99 and R127. 7 residues coordinate 3-phosphoshikimate: S173, S174, Q175, S201, D317, N340, and K344. Phosphoenolpyruvate is bound at residue Q175. The active-site Proton acceptor is D317. Residues R348, R390, and K415 each contribute to the phosphoenolpyruvate site.

Belongs to the EPSP synthase family. As to quaternary structure, monomer.

The protein localises to the cytoplasm. It catalyses the reaction 3-phosphoshikimate + phosphoenolpyruvate = 5-O-(1-carboxyvinyl)-3-phosphoshikimate + phosphate. It functions in the pathway metabolic intermediate biosynthesis; chorismate biosynthesis; chorismate from D-erythrose 4-phosphate and phosphoenolpyruvate: step 6/7. Functionally, catalyzes the transfer of the enolpyruvyl moiety of phosphoenolpyruvate (PEP) to the 5-hydroxyl of shikimate-3-phosphate (S3P) to produce enolpyruvyl shikimate-3-phosphate and inorganic phosphate. The sequence is that of 3-phosphoshikimate 1-carboxyvinyltransferase from Pseudoalteromonas atlantica (strain T6c / ATCC BAA-1087).